We begin with the raw amino-acid sequence, 157 residues long: UPF0262 protein RHE_CH00582 (157 aa).

Belongs to the UPF0262 family.

The polypeptide is UPF0262 protein RHE_CH00582 (Rhizobium etli (strain ATCC 51251 / DSM 11541 / JCM 21823 / NBRC 15573 / CFN 42)).